The chain runs to 581 residues: uncharacterized protein (581 aa).

The first 28 residues, 1-28 (MDSKAVSPLIGFVLMLAIIMGLIGIMQA), serve as a signal peptide directing secretion.

This is an uncharacterized protein from Archaeoglobus fulgidus (strain ATCC 49558 / DSM 4304 / JCM 9628 / NBRC 100126 / VC-16).